A 101-amino-acid polypeptide reads, in one-letter code: NADH-quinone oxidoreductase subunit K (101 aa).

Transmembrane regions (helical) follow at residues 4–24 (LAHY…GIFL), 29–49 (IIII…NFVA), and 61–81 (IFVF…LAIL).

This sequence belongs to the complex I subunit 4L family. As to quaternary structure, NDH-1 is composed of 14 different subunits. Subunits NuoA, H, J, K, L, M, N constitute the membrane sector of the complex.

It localises to the cell inner membrane. The catalysed reaction is a quinone + NADH + 5 H(+)(in) = a quinol + NAD(+) + 4 H(+)(out). Functionally, NDH-1 shuttles electrons from NADH, via FMN and iron-sulfur (Fe-S) centers, to quinones in the respiratory chain. The immediate electron acceptor for the enzyme in this species is believed to be ubiquinone. Couples the redox reaction to proton translocation (for every two electrons transferred, four hydrogen ions are translocated across the cytoplasmic membrane), and thus conserves the redox energy in a proton gradient. The chain is NADH-quinone oxidoreductase subunit K from Burkholderia ambifaria (strain MC40-6).